Here is a 586-residue protein sequence, read N- to C-terminus: MNIFAAFEERIGEALATLTRAGQLPEGLDLGRVVVEPPRDPGHGDLATNAALVLAKEARTNPKALAELLAAELRQDPRVTEASVAGPGFLNLRLAPEVFAEVVRAALASGEAFGRGARRPGLVNVEYVSANPTGPMHVGHGRGAVFGDALANLLAASGREVVREYYINDAGAQVDVLARSAYLRYREALGDAIGAIPEGLYPGDYLKPVGRRLAETHGRALLREPESAWLPVVRDFAIAAMMDLIRDDLAALGIRHDVFFSERTLQGGGDGGAVGALIAELREKGLVYVGRLPPPKGQLPEDWEDRDQTLFRSTAFGDDIDRPLLKSDGTYTYFASDIAYHASKVARGATDLIDVLGADHGGYVKRMQAAVRAVSDGRASLDVKLCQLVRLLRGGEPVKMSKRAGEFVTLREVIDEVGRDPVRFMMLYRKNDATLDFDLAKVVEQSKDNPVFYVQYAHARTASVFRQAREAFPGEDLSPQALAGADLSLLRDSGEADIMRLVAQYPRVIEAAGSAHEPHRLAFYLYELASAFHSFWNKGKDLPQLRFVNQTDRKSTLSRLALVAALRGVLASGLGILGVTAPDEMR.

A 'HIGH' region motif is present at residues 130 to 140 (ANPTGPMHVGH).

This sequence belongs to the class-I aminoacyl-tRNA synthetase family. In terms of assembly, monomer.

Its subcellular location is the cytoplasm. The catalysed reaction is tRNA(Arg) + L-arginine + ATP = L-arginyl-tRNA(Arg) + AMP + diphosphate. The polypeptide is Arginine--tRNA ligase (Methylobacterium sp. (strain 4-46)).